Consider the following 279-residue polypeptide: MHPDAQLKAAVKNGFDPNILCQRRLTVVKEPVRTILEKQGTIPADKIVDHVNELRDRAFAVFPYACIGQFSFVELSIAESPYYREMLERVKKGDLLLDLGCAFGQELRQLMFDGAPPTNLYGSDLQQEFLNLGYELFLDQPIFPESQLIAADILDKKSALFVRLQGKLNIVYISLFLHVFDWDKQVTVLENVLDLLAATPGSLIVCRVIACRNQAVLNKTHERMPYYYHDLASWNKLWEEIRTRTSLRLAVDVWEQPDDLVKKHPLPGIYVLGSAIRRH.

Residues 124–125 (DL), 152–153 (DI), and Arg244 contribute to the S-adenosyl-L-methionine site.

This sequence belongs to the class I-like SAM-binding methyltransferase superfamily. As to quaternary structure, homodimer.

It participates in secondary metabolite biosynthesis; terpenoid biosynthesis. Methyltransferase; part of the gene cluster that mediates the biosynthesis of calidodehydroaustin, a fungal meroterpenoid. The first step of the pathway is the synthesis of 3,5-dimethylorsellinic acid by the polyketide synthase ausA. 3,5-dimethylorsellinic acid is then prenylated by the polyprenyl transferase ausN. Further epoxidation by the FAD-dependent monooxygenase ausM and cyclization by the probable terpene cyclase ausL lead to the formation of protoaustinoid A. Protoaustinoid A is then oxidized to spiro-lactone preaustinoid A3 by the combined action of the FAD-binding monooxygenases ausB and ausC, and the dioxygenase ausE. Acid-catalyzed keto-rearrangement and ring contraction of the tetraketide portion of preaustinoid A3 by ausJ lead to the formation of preaustinoid A4. The aldo-keto reductase ausK, with the help of ausH, is involved in the next step by transforming preaustinoid A4 into isoaustinone which is in turn hydroxylated by the P450 monooxygenase ausI to form austinolide. The cytochrome P450 monooxygenase ausG modifies austinolide to austinol. Austinol is further acetylated to austin by the O-acetyltransferase ausP, which spontaneously changes to dehydroaustin. The cytochrome P450 monooxygenase ausR then converts dehydroaustin is into 7-dehydrodehydroaustin. The hydroxylation catalyzed by ausR permits the O-acetyltransferase ausQ to add an additional acetyl group to the molecule, leading to the formation of acetoxydehydroaustin. The short chain dehydrogenase ausT catalyzes the reduction of the double bond present between carbon atoms 1 and 2 to convert 7-dehydrodehydroaustin into 1,2-dihydro-7-hydroxydehydroaustin. AusQ catalyzes not only an acetylation reaction but also the addition of the PKS ausV diketide product to 1,2-dihydro-7-hydroxydehydroaustin, forming precalidodehydroaustin. Finally, the iron/alpha-ketoglutarate-dependent dioxygenase converts precalidodehydroaustin into calidodehydroaustin. This chain is Methyltransferase ausD, found in Aspergillus calidoustus.